The following is a 101-amino-acid chain: Large ribosomal subunit protein uL24 (101 aa).

Belongs to the universal ribosomal protein uL24 family. In terms of assembly, part of the 50S ribosomal subunit.

Its function is as follows. One of two assembly initiator proteins, it binds directly to the 5'-end of the 23S rRNA, where it nucleates assembly of the 50S subunit. One of the proteins that surrounds the polypeptide exit tunnel on the outside of the subunit. This Elusimicrobium minutum (strain Pei191) protein is Large ribosomal subunit protein uL24.